The primary structure comprises 177 residues: O-acetyl-ADP-ribose deacetylase (177 aa).

Residues 1–175 (MKSRIHVLQG…LYNRLLTQQG (175 aa)) form the Macro domain. Substrate contacts are provided by residues 11 to 12 (DI), Asn-25, 33 to 35 (GVD), and 122 to 126 (STGVY). Asp-35 acts as the Proton acceptor in catalysis.

The protein belongs to the MacroD-type family. YmdB subfamily. As to quaternary structure, homodimer. Interacts with RNase III.

It catalyses the reaction 3''-O-acetyl-ADP-D-ribose + H2O = ADP-D-ribose + acetate + H(+). It carries out the reaction 2''-O-acetyl-ADP-D-ribose + H2O = ADP-D-ribose + acetate + H(+). Functionally, deacetylates O-acetyl-ADP ribose to yield ADP-ribose and free acetate. Down-regulates ribonuclease 3 (RNase III) activity. Acts by interacting directly with the region of the ribonuclease that is required for dimerization/activation. The sequence is that of O-acetyl-ADP-ribose deacetylase from Escherichia fergusonii (strain ATCC 35469 / DSM 13698 / CCUG 18766 / IAM 14443 / JCM 21226 / LMG 7866 / NBRC 102419 / NCTC 12128 / CDC 0568-73).